The primary structure comprises 434 residues: Transcription factor AP-2-epsilon (434 aa).

The segment at 30-123 is disordered; that stretch reads LNQGPYSSAP…GLSLDPRRDY (94 aa). Over residues 52–62 the composition is skewed to pro residues; it reads PYFPPPYPQPP. Residues 53–58 carry the PPxY motif motif; the sequence is YFPPPY. The span at 81–97 shows a compositional bias: polar residues; sequence SSINSIHHQHQQPSWHT. The H-S-H (helix-span-helix), dimerization stretch occupies residues 278 to 408; the sequence is RRKAANVTLL…YLLESLKGMD (131 aa). The segment at 415-434 is disordered; that stretch reads TGNGHSAAESKSEKDIKHRK. The segment covering 422–434 has biased composition (basic and acidic residues); it reads AESKSEKDIKHRK.

The protein belongs to the AP-2 family. In terms of assembly, binds DNA as a dimer. Can form homodimers or heterodimers with other AP-2 family members.

Its subcellular location is the nucleus. In terms of biological role, sequence-specific DNA-binding protein that interacts with inducible viral and cellular enhancer elements to regulate transcription of selected genes. AP-2 factors bind to the consensus sequence 5'-GCCNNNGGC-3' and activate genes involved in a large spectrum of important biological functions. The protein is Transcription factor AP-2-epsilon of Xenopus laevis (African clawed frog).